We begin with the raw amino-acid sequence, 316 residues long: Olfactory receptor 10A7 (316 aa).

Topologically, residues 1–25 (MICENHTRVTEFILLGFTNNPEMQV) are extracellular. Residue N5 is glycosylated (N-linked (GlcNAc...) asparagine). A helical transmembrane segment spans residues 26 to 46 (SLFIFFLAIYTVTLLGNFLIV). The Cytoplasmic portion of the chain corresponds to 47 to 54 (TVTSVDLA). The helical transmembrane segment at 55–75 (LQTPMYFFLQNLSLLEVCFTL) threads the bilayer. Residues 76–99 (VMVPKMLVDLVSPRKIISFVGCGT) are Extracellular-facing. The helical transmembrane segment at 100–120 (QMYFFFFFGSSECFLLSMMAY) threads the bilayer. Topologically, residues 121–139 (DRFVAICNPLHYSVIMNRS) are cytoplasmic. A helical membrane pass occupies residues 140 to 160 (LCLWMAIGSWMSGVPVSMLQT). Residues 161-197 (AWMMALPFCGPNAVDHFFCDGPPVLKLVTVDTTMYEM) are Extracellular-facing. Residues 198–217 (QALASTLLFIMFPFCLILVS) form a helical membrane-spanning segment. The Cytoplasmic portion of the chain corresponds to 218-237 (YTRIIITILRMSSATGRQKA). A helical membrane pass occupies residues 238-258 (FSTCSSHLIVVSLFYGTASLT). Over 259-271 (YLRPKSNQSPESK) the chain is Extracellular. Residues 272–292 (KLVSLSYTVITPMLNPIIYGL) traverse the membrane as a helical segment. Over 293 to 316 (RNNEVKGAVKRTITQKVLQKLDVF) the chain is Cytoplasmic.

This sequence belongs to the G-protein coupled receptor 1 family.

Its subcellular location is the cell membrane. Functionally, odorant receptor. In Homo sapiens (Human), this protein is Olfactory receptor 10A7 (OR10A7).